Here is a 214-residue protein sequence, read N- to C-terminus: MQLDKGLFVAFEGPDACGKSTVSKLVYQKLINFFNNKDSVILTREPGGTEVGEKIREILVNYDIDPRTEALLFAASRTEHVWNVILKAKANKKIILCDRFIHSSLVYQGIVKNLGYKNVYKVNQFGISKIKPDIVFYFSANPKVLLERKTKDKDRDIFDRLDNQYAQEENLKKIIGGYSSILQFDNRNVIRLDALKPVEELANKICATILERVR.

13 to 20 contributes to the ATP binding site; that stretch reads GPDACGKS.

This sequence belongs to the thymidylate kinase family.

The catalysed reaction is dTMP + ATP = dTDP + ADP. Phosphorylation of dTMP to form dTDP in both de novo and salvage pathways of dTTP synthesis. The polypeptide is Thymidylate kinase (Malacoplasma penetrans (strain HF-2) (Mycoplasma penetrans)).